A 234-amino-acid chain; its full sequence is DNA repair protein RecO (234 aa).

This sequence belongs to the RecO family.

Involved in DNA repair and RecF pathway recombination. This Hamiltonella defensa subsp. Acyrthosiphon pisum (strain 5AT) protein is DNA repair protein RecO.